The sequence spans 200 residues: Peptidyl-tRNA hydrolase (200 aa).

Tyr15 provides a ligand contact to tRNA. His20 (proton acceptor) is an active-site residue. 3 residues coordinate tRNA: Tyr66, Asn68, and Asn114.

Belongs to the PTH family. Monomer.

The protein resides in the cytoplasm. The catalysed reaction is an N-acyl-L-alpha-aminoacyl-tRNA + H2O = an N-acyl-L-amino acid + a tRNA + H(+). Its function is as follows. Hydrolyzes ribosome-free peptidyl-tRNAs (with 1 or more amino acids incorporated), which drop off the ribosome during protein synthesis, or as a result of ribosome stalling. Catalyzes the release of premature peptidyl moieties from peptidyl-tRNA molecules trapped in stalled 50S ribosomal subunits, and thus maintains levels of free tRNAs and 50S ribosomes. The polypeptide is Peptidyl-tRNA hydrolase (Paraburkholderia phymatum (strain DSM 17167 / CIP 108236 / LMG 21445 / STM815) (Burkholderia phymatum)).